Reading from the N-terminus, the 288-residue chain is Oxaloacetate decarboxylase (288 aa).

Ser-47 serves as a coordination point for substrate. Asp-85 provides a ligand contact to Mg(2+). Substrate is bound by residues Arg-156 and His-232.

This sequence belongs to the isocitrate lyase/PEP mutase superfamily. Oxaloacetate decarboxylase family. In terms of assembly, homotetramer; dimer of dimers. It depends on Mg(2+) as a cofactor.

It carries out the reaction oxaloacetate + H(+) = pyruvate + CO2. In terms of biological role, catalyzes the decarboxylation of oxaloacetate into pyruvate. Seems to play a role in maintaining cellular concentrations of bicarbonate and pyruvate. In Rhodopseudomonas palustris (strain BisB18), this protein is Oxaloacetate decarboxylase.